Reading from the N-terminus, the 188-residue chain is Elongation factor P (188 aa).

The protein belongs to the elongation factor P family.

Its subcellular location is the cytoplasm. It functions in the pathway protein biosynthesis; polypeptide chain elongation. In terms of biological role, involved in peptide bond synthesis. Stimulates efficient translation and peptide-bond synthesis on native or reconstituted 70S ribosomes in vitro. Probably functions indirectly by altering the affinity of the ribosome for aminoacyl-tRNA, thus increasing their reactivity as acceptors for peptidyl transferase. The polypeptide is Elongation factor P (Methylobacterium radiotolerans (strain ATCC 27329 / DSM 1819 / JCM 2831 / NBRC 15690 / NCIMB 10815 / 0-1)).